Consider the following 213-residue polypeptide: UPF0111 protein TM_0914 (213 aa).

This sequence belongs to the UPF0111 family.

This chain is UPF0111 protein TM_0914, found in Thermotoga maritima (strain ATCC 43589 / DSM 3109 / JCM 10099 / NBRC 100826 / MSB8).